The primary structure comprises 521 residues: Protein TESPA1 (521 aa).

Ser-311 is subject to Phosphoserine. Positions 331-341 (QQDSDLGQFSQ) are enriched in polar residues. Disordered regions lie at residues 331–351 (QQDS…AEGK) and 461–521 (QQKW…GKDS). A compositionally biased stretch (basic and acidic residues) spans 466–475 (QSVDRPELRR). Residues 485 to 498 (FDLEEVQSNSEEEQ) are compositionally biased toward acidic residues. Over residues 505–514 (SRPRHPHHHQ) the composition is skewed to basic residues.

In terms of assembly, interacts with PLCG1 and GRB2; the association is increased with prolonged stimulation of the TCR and may facilitate the assembly of the LAT signalosome. Interacts with ITPR1. Also interacts with ITPR3. Interacts with HSPA9. Post-translationally, may be phosphorylated in response to store-operated Ca(+2) entry.

Its subcellular location is the cytoplasm. The protein localises to the endoplasmic reticulum membrane. Functionally, required for the development and maturation of T-cells, its function being essential for the late stages of thymocyte development. Plays a role in T-cell antigen receptor (TCR)-mediated activation of the ERK and NFAT signaling pathways, possibly by serving as a scaffolding protein that promotes the assembly of the LAT signalosome in thymocytes. May play a role in the regulation of inositol 1,4,5-trisphosphate receptor-mediated Ca(2+) release and mitochondrial Ca(2+) uptake via the mitochondria-associated endoplasmic reticulum membrane (MAM) compartment. The sequence is that of Protein TESPA1 (TESPA1) from Homo sapiens (Human).